A 233-amino-acid chain; its full sequence is MAKLTKRARLIREKVEATKSYDINEAVALLKELATAKFLESVDVAVNLGVDPRKSDQNVRGATVLPHGTGRDVRVAVFTQGANAEAAKEAGAELVGMDELAAQIKAGEMNFDVVIASPDAMRVVGMLGQILGPRGLMPNPKTGTVTPNVAEAVKNAKAGQVRYRNDKNGIIHTTIGKVDFEPAQLKENLEALLGALKKAKPAAAKGVFIKKVSISTTMGAGVAVDQGTLDDAK.

This sequence belongs to the universal ribosomal protein uL1 family. As to quaternary structure, part of the 50S ribosomal subunit.

Binds directly to 23S rRNA. The L1 stalk is quite mobile in the ribosome, and is involved in E site tRNA release. Its function is as follows. Protein L1 is also a translational repressor protein, it controls the translation of the L11 operon by binding to its mRNA. This chain is Large ribosomal subunit protein uL1, found in Shewanella pealeana (strain ATCC 700345 / ANG-SQ1).